Consider the following 64-residue polypeptide: Large ribosomal subunit protein bL35 (64 aa).

Disordered regions lie at residues 1-22 and 34-64; these read MPKAKTHSGASKRFRRTGTGKI and EHKPTTRTRRLEGRTTVSANDTKRVNSLLNG. A compositionally biased stretch (basic and acidic residues) spans 34-46; sequence EHKPTTRTRRLEG. Polar residues predominate over residues 50–64; the sequence is VSANDTKRVNSLLNG.

Belongs to the bacterial ribosomal protein bL35 family.

In Mycolicibacterium paratuberculosis (strain ATCC BAA-968 / K-10) (Mycobacterium paratuberculosis), this protein is Large ribosomal subunit protein bL35.